The following is a 245-amino-acid chain: Carboxymethylenebutenolidase homolog (245 aa).

Ala2 bears the N-acetylalanine mark. The residue at position 36 (Lys36) is an N6-acetyllysine. Catalysis depends on residues Cys132, Asp179, and His212. Ser223 is subject to Phosphoserine.

Belongs to the dienelactone hydrolase family.

It is found in the cytoplasm. The protein localises to the cytosol. Functionally, cysteine hydrolase. The sequence is that of Carboxymethylenebutenolidase homolog (CMBL) from Pongo abelii (Sumatran orangutan).